A 143-amino-acid chain; its full sequence is Large-conductance mechanosensitive channel (143 aa).

The next 3 membrane-spanning stretches (helical) occupy residues 10-30 (FAIK…GAFG), 40-60 (IIMP…QKFI), and 86-106 (GNFL…FLMV).

The protein belongs to the MscL family. Homopentamer.

The protein resides in the cell inner membrane. Its function is as follows. Channel that opens in response to stretch forces in the membrane lipid bilayer. May participate in the regulation of osmotic pressure changes within the cell. The protein is Large-conductance mechanosensitive channel of Acinetobacter baumannii (strain ATCC 17978 / DSM 105126 / CIP 53.77 / LMG 1025 / NCDC KC755 / 5377).